The sequence spans 3073 residues: Adhesion G-protein coupled receptor G4 (3073 aa).

The N-terminal stretch at 1–25 (MRKHILHQRLCGLILVSSFIFLTDS) is a signal peptide. The Extracellular portion of the chain corresponds to 26–2691 (LSLKGKRLDF…RSTVDAVNER (2666 aa)). The Pentraxin (PTX) domain occupies 29–228 (KGKRLDFYGE…SPTVDRRLRC (200 aa)). 2 disulfides stabilise this stretch: cysteine 58/cysteine 123 and cysteine 200/cysteine 228. Asparagine 233 carries an N-linked (GlcNAc...) asparagine glycan. The tract at residues 253–272 (SQTTGLNPHKTSHSSTLLPE) is disordered. A glycan (N-linked (GlcNAc...) asparagine) is linked at asparagine 662. Composition is skewed to polar residues over residues 671–696 (GNAT…ESKV) and 929–951 (GNSA…SSST). Disordered stretches follow at residues 671-697 (GNAT…SKVT) and 924-951 (SEKS…SSST). 3 N-linked (GlcNAc...) asparagine glycosylation sites follow: asparagine 1141, asparagine 1304, and asparagine 1495. Disordered stretches follow at residues 1565–1595 (FTSS…AGPT), 1741–1760 (TLTN…STPT), and 1945–1972 (ITLS…SDSR). The segment covering 1945–1954 (ITLSSNPSVN) has biased composition (polar residues). The span at 1955–1972 (SRATSPTWSSSSLPSDSR) shows a compositional bias: low complexity. A GAIN-B domain is found at 2535–2684 (SSEEVIAPQI…GVLMDLSRST (150 aa)). 2 disulfide bridges follow: cysteine 2635-cysteine 2666 and cysteine 2654-cysteine 2668. The interval 2635-2684 (CAFWDFDTNNGLGGWNPSGCKLKESNINYTICQCNHLTHFGVLMDLSRST) is GPS. The segment at 2673–2684 (HFGVLMDLSRST) is stachel. A helical membrane pass occupies residues 2692-2712 (ILVIITYTGCGISSIFLGIAM). Over 2713-2728 (VTYIAFHKLRKDYPSK) the chain is Cytoplasmic. Residues 2729–2749 (ILINLCTALLMLNLAFLVNSW) traverse the membrane as a helical segment. The Extracellular portion of the chain corresponds to 2750-2755 (LTSFQK). Residues 2756–2776 (VGLCITAAVALHYFLLVSLTW) traverse the membrane as a helical segment. Cysteines 2759 and 2836 form a disulfide. At 2777-2798 (MGLEAVHMYFALVKVFNTYIPN) the chain is on the cytoplasmic side. A helical membrane pass occupies residues 2799–2819 (YILKFCLAGWGIPAITVAIIL). The Extracellular segment spans residues 2820 to 2842 (SVRKDLYGTLSPTTPFCWIKDDH). Residues 2843 to 2863 (IFYISVVAYFCLIFLMNLSMF) form a helical membrane-spanning segment. Over 2864 to 2892 (CTVLVQLTSVKSQSQKTRKKMILNDLKGT) the chain is Cytoplasmic. A helical membrane pass occupies residues 2893 to 2913 (ISLTFLLGLTWGFAFFAWGPV). Residue arginine 2914 is a topological domain, extracellular. The helical transmembrane segment at 2915 to 2935 (IFFLYLFAICNTLQGFLIFVF) threads the bilayer. Residues 2936 to 3073 (YCVMKESVRE…SSGLGEMFNL (138 aa)) are Cytoplasmic-facing.

It belongs to the G-protein coupled receptor 2 family. Adhesion G-protein coupled receptor (ADGR) subfamily. Homodimer; homodimerizes via its Pentraxin domain in a calcium-independent manner. Heterodimer of 2 chains generated by proteolytic processing; the large extracellular N-terminal fragment and the membrane-bound C-terminal fragment predominantly remain associated and non-covalently linked. Post-translationally, autoproteolytically processed at the GPS region of the GAIN-B domain; this cleavage modulates receptor activity.

It localises to the membrane. Its activity is regulated as follows. Forms a heterodimer of 2 chains generated by proteolytic processing that remain associated through non-covalent interactions mediated by the GAIN-B domain. In the inactivated receptor, the Stachel sequence (also named stalk) is embedded in the GAIN-B domain, where it adopts a beta-strand conformation. On activation, the Stachel moves into the 7 transmembrane region and adopts a twisted hook-shaped configuration that forms contacts within the receptor, leading to coupling of a G-alpha protein, which activates signaling. The cleaved GAIN-B and N-terminal domains can then dissociate from the rest of the receptor. Orphan adhesion G-protein coupled receptor (aGPCR). Ligand binding causes a conformation change that triggers signaling via guanine nucleotide-binding proteins (G proteins) and modulates the activity of downstream effectors, such as adenylate cyclase. ADGRG4 is coupled to G(s) G proteins and mediates activation of adenylate cyclase activity. May be act as sensor of mechanical forces. This chain is Adhesion G-protein coupled receptor G4, found in Mus musculus (Mouse).